The following is a 259-amino-acid chain: Proteasome subunit alpha type-7 (259 aa).

This sequence belongs to the peptidase T1A family. In terms of assembly, the 26S proteasome consists of a 20S proteasome core and two 19S regulatory subunits. The 20S proteasome core is composed of 28 subunits that are arranged in four stacked rings, resulting in a barrel-shaped structure. The two end rings are each formed by seven alpha subunits, and the two central rings are each formed by seven beta subunits. The catalytic chamber with the active sites is on the inside of the barrel.

It localises to the cytoplasm. Its subcellular location is the nucleus. In terms of biological role, the proteasome is a multicatalytic proteinase complex which is characterized by its ability to cleave peptides with Arg, Phe, Tyr, Leu, and Glu adjacent to the leaving group at neutral or slightly basic pH. The proteasome has an ATP-dependent proteolytic activity. The protein is Proteasome subunit alpha type-7 (PAD1) of Solanum lycopersicum (Tomato).